The primary structure comprises 135 residues: Large ribosomal subunit protein uL16c (135 aa).

Basic residues predominate over residues 1 to 17 (MLSPKRTRFRKQHRGRM). Positions 1–21 (MLSPKRTRFRKQHRGRMKGVS) are disordered.

The protein belongs to the universal ribosomal protein uL16 family. Part of the 50S ribosomal subunit.

The protein resides in the plastid. It is found in the chloroplast. The polypeptide is Large ribosomal subunit protein uL16c (Amborella trichopoda).